Here is a 306-residue protein sequence, read N- to C-terminus: N(1)-aminopropylagmatine ureohydrolase (306 aa).

Positions 121, 145, 147, 149, 228, and 230 each coordinate Mn(2+).

The protein belongs to the arginase family. It depends on Mn(2+) as a cofactor.

It catalyses the reaction N(1)-(3-aminopropyl)agmatine + H2O = urea + spermidine. It functions in the pathway amine and polyamine biosynthesis; spermidine biosynthesis. In terms of biological role, ureohydrolase involved in the biosynthesis of spermidine via the carboxyaminopropylagmatine (CAPA) pathway. Catalyzes the conversion of aminopropylagmatine (APA) to spermidine and urea. Is highly specific to APA and incapable of releasing measurable urea from CAPA, agmatine, arginine, guanidine, guanidinobutyrate and guanidinopropionate. This Synechocystis sp. (strain ATCC 27184 / PCC 6803 / Kazusa) protein is N(1)-aminopropylagmatine ureohydrolase.